The chain runs to 312 residues: MFFSVKNVFLLGIFGFVLGALAETSHLERLSLEAPYINHGMRNLWWEYGGSTVIDRKNGIFLTQDVQNQQGWISTRLPTPSSSFEVLFQFRINSESTSLFGDGLAFFLAAERAKPGPVFGFTDKFNGYGIFIDTYNNHRPGTLFPRVIVMKGDGHTPYDYENDGKANEIASCSALNVRGNDYNLGKLKYDKNAKKLRFEIAYQGSSSFIKCFDLNEVELPLTTFMSFSAHTGDLSESHEIASILSRTITDIDDEGTPEIPAEELKGTTYGQKKGSFKKRLIILLLSLIVIFSIFALRSYQVQQEKNRRTTVL.

Positions 1–22 (MFFSVKNVFLLGIFGFVLGALA) are cleaved as a signal peptide. Topologically, residues 23 to 280 (ETSHLERLSL…QKKGSFKKRL (258 aa)) are extracellular. The L-type lectin-like domain occupies 24–248 (TSHLERLSLE…EIASILSRTI (225 aa)). A helical membrane pass occupies residues 281-301 (IILLLSLIVIFSIFALRSYQV). Residues 302–312 (QQEKNRRTTVL) lie on the Cytoplasmic side of the membrane.

Its subcellular location is the membrane. It localises to the endoplasmic reticulum. The protein resides in the golgi apparatus. The protein localises to the vacuole. The sequence is that of L-type lectin-like domain-containing protein C126.08c from Schizosaccharomyces pombe (strain 972 / ATCC 24843) (Fission yeast).